Here is a 67-residue protein sequence, read N- to C-terminus: Bowman-Birk type major trypsin inhibitor (67 aa).

Disulfide bonds link C8–C63, C9–C24, C14–C22, C31–C38, and C35–C51.

Belongs to the Bowman-Birk serine protease inhibitor family.

The sequence is that of Bowman-Birk type major trypsin inhibitor from Setaria italica (Foxtail millet).